We begin with the raw amino-acid sequence, 156 residues long: ATP synthase subunit b (156 aa).

Residues 7–27 traverse the membrane as a helical segment; the sequence is LVAQMVVFFILWWVVAKFIWP.

This sequence belongs to the ATPase B chain family. In terms of assembly, F-type ATPases have 2 components, F(1) - the catalytic core - and F(0) - the membrane proton channel. F(1) has five subunits: alpha(3), beta(3), gamma(1), delta(1), epsilon(1). F(0) has three main subunits: a(1), b(2) and c(10-14). The alpha and beta chains form an alternating ring which encloses part of the gamma chain. F(1) is attached to F(0) by a central stalk formed by the gamma and epsilon chains, while a peripheral stalk is formed by the delta and b chains.

Its subcellular location is the cell inner membrane. Its function is as follows. F(1)F(0) ATP synthase produces ATP from ADP in the presence of a proton or sodium gradient. F-type ATPases consist of two structural domains, F(1) containing the extramembraneous catalytic core and F(0) containing the membrane proton channel, linked together by a central stalk and a peripheral stalk. During catalysis, ATP synthesis in the catalytic domain of F(1) is coupled via a rotary mechanism of the central stalk subunits to proton translocation. In terms of biological role, component of the F(0) channel, it forms part of the peripheral stalk, linking F(1) to F(0). This is ATP synthase subunit b from Ralstonia pickettii (strain 12J).